We begin with the raw amino-acid sequence, 217 residues long: Ras-related protein RABA1e (217 aa).

20–27 provides a ligand contact to GTP; sequence GDSGVGKS. The Effector region signature appears at 42–50; the sequence is SKSTIGVEF. GTP contacts are provided by residues 68–72, 126–129, and 156–157; these read DTAGQ, NKAD, and SA. S-geranylgeranyl cysteine attachment occurs at residues cysteine 214 and cysteine 215.

It belongs to the small GTPase superfamily. Rab family.

The protein resides in the cell membrane. Its function is as follows. Intracellular vesicle trafficking and protein transport. In Arabidopsis thaliana (Mouse-ear cress), this protein is Ras-related protein RABA1e (RABA1E).